We begin with the raw amino-acid sequence, 422 residues long: G2/mitotic-specific cyclin-A (422 aa).

A disordered region spans residues 1 to 29 (MSQPFALHHDGENQMQRRGKMNTRSNGLS).

Belongs to the cyclin family. Cyclin AB subfamily.

Its function is as follows. Essential for the control of the cell cycle at the G2/M (mitosis) transition. Interacts with the CDC2 and CDK2 protein kinases to form MPF. G2/M cyclins accumulate steadily during G2 and are abruptly destroyed at mitosis. The chain is G2/mitotic-specific cyclin-A from Spisula solidissima (Atlantic surf-clam).